The primary structure comprises 419 residues: Gamma-glutamyl phosphate reductase (419 aa).

Belongs to the gamma-glutamyl phosphate reductase family.

It is found in the cytoplasm. It catalyses the reaction L-glutamate 5-semialdehyde + phosphate + NADP(+) = L-glutamyl 5-phosphate + NADPH + H(+). It participates in amino-acid biosynthesis; L-proline biosynthesis; L-glutamate 5-semialdehyde from L-glutamate: step 2/2. Functionally, catalyzes the NADPH-dependent reduction of L-glutamate 5-phosphate into L-glutamate 5-semialdehyde and phosphate. The product spontaneously undergoes cyclization to form 1-pyrroline-5-carboxylate. The protein is Gamma-glutamyl phosphate reductase of Yersinia pestis.